The primary structure comprises 497 residues: Lysophospholipid acyltransferase 5 (497 aa).

The next 6 membrane-spanning stretches (helical) occupy residues 31 to 51, 74 to 94, 100 to 120, 173 to 193, 213 to 235, and 264 to 286; these read LLTI…ISVI, GLDT…VLLL, IFLA…YFYT, LELL…QFPF, AGVR…LRYL, and SLYK…GLTY. Residues N322 and H358 contribute to the active site. Residues 339–361 form a helical membrane-spanning segment; the sequence is FLNNRTISYGAALGFLAVWHGYH. N398 carries N-linked (GlcNAc...) asparagine glycosylation. The next 2 helical transmembrane spans lie at 408–428 and 435–455; these read FITL…AFVF and IVVY…WAAF. The tract at residues 469–497 is disordered; that stretch reads KLAGEDQKLQDSNTDKLVEEKKPEDKKSE. Over residues 470 to 497 the composition is skewed to basic and acidic residues; sequence LAGEDQKLQDSNTDKLVEEKKPEDKKSE. Residue S480 is modified to Phosphoserine.

It belongs to the membrane-bound acyltransferase family. In terms of tissue distribution, during gastrulation, expressed mainly along the midline in the presumptive mesoderm. During germ band elongation, expressed in mesoderm and endoderm primordia and in the cephalic furrow. Expression in mesoderm and endoderm lineages continues during germ band shortening. At the end of this process, no longer detected in somatic mesoderm or endoderm layer with expression restricted to anterior and posterior domains of the visceral mesoderm.

Its subcellular location is the endoplasmic reticulum. It is found in the membrane. It catalyses the reaction a 1-acyl-sn-glycero-3-phospho-L-serine + an acyl-CoA = a 1,2-diacyl-sn-glycero-3-phospho-L-serine + CoA. It carries out the reaction 1-(9Z-octadecenoyl)-sn-glycero-3-phospho-L-serine + (9Z)-hexadecenoyl-CoA = 1-(9Z-octadecenoyl)-2-(9Z-hexadecenoyl)-sn-glycero-3-phospho-L-serine + CoA. The catalysed reaction is a 1-acyl-sn-glycero-3-phosphocholine + an acyl-CoA = a 1,2-diacyl-sn-glycero-3-phosphocholine + CoA. The enzyme catalyses 1-hexadecanoyl-sn-glycero-3-phosphocholine + (9Z)-octadecenoyl-CoA = 1-hexadecanoyl-2-(9Z-octadecenoyl)-sn-glycero-3-phosphocholine + CoA. It catalyses the reaction (9Z,12Z)-octadecadienoyl-CoA + 1-hexadecanoyl-sn-glycero-3-phosphocholine = 1-hexadecanoyl-2-(9Z,12Z-octadecadienoyl)-sn-glycero-3-phosphocholine + CoA. It carries out the reaction (5Z,8Z,11Z,14Z)-eicosatetraenoyl-CoA + 1-hexadecanoyl-sn-glycero-3-phosphocholine = 1-hexadecanoyl-2-(5Z,8Z,11Z,14Z-eicosatetraenoyl)-sn-glycero-3-phosphocholine + CoA. The catalysed reaction is (9Z)-hexadecenoyl-CoA + 1-hexadecanoyl-sn-glycero-3-phosphocholine = 1-hexadecanoyl-2-(9Z-hexadecenoyl)-sn-glycero-3-phosphocholine + CoA. Its pathway is lipid metabolism; phospholipid metabolism. In terms of biological role, acyltransferase that mediates the acylation of lysophospholipids to produce phospholipids (glycerophospholipids). Highest activity with lysophosphatidylcholine (1-acyl-sn-glycero-3-phosphocholine or LPC) producing phosphatidylcholine (1,2-diacyl-sn-glycero-3-phosphocholine or PC) (LPCAT activity), but also converts lysophosphatidylserine (1-acyl-2-hydroxy-sn-glycero-3-phospho-L-serine or LPS) to phosphatidylserine (1,2-diacyl-sn-glycero-3-phospho-L-serine or PS) (LPSAT activity). Has a preference for unsaturated fatty acids of at least 16 carbons such as oleoyl-CoA ((9Z)-octadecenoyl-CoA) and palmitoleoyl-CoA ((9Z)-hexadecenoyl-CoA). Glycerophospholipids are important structural and functional components of cellular membrane, acyl-chain remodeling regulates the molecular species distribution of glycerophospholipids which can affect membrane fluidity and curvature. Essential for fertility and viability together with Oysgedart (Oys). Required for germ cells to migrate into the mesoderm. The protein is Lysophospholipid acyltransferase 5 of Drosophila melanogaster (Fruit fly).